The primary structure comprises 462 residues: Bifunctional dihydrofolate reductase-thymidylate synthase (462 aa).

The DHFR domain maps to 6–165 (TFSMVLAMTL…INYDYQHLIN (160 aa)). Val-10 lines the substrate pocket. NADP(+) contacts are provided by residues Ala-12 and 18–24 (GIGYQNR). Asp-32 lines the substrate pocket. Residues 49-51 (RKT) and 68-71 (ISKN) each bind NADP(+). Substrate is bound at residue Ile-101. Residue 102-109 (GGKRIFEE) coordinates NADP(+). Thr-122 provides a ligand contact to substrate. A thymidylate synthase region spans residues 180 to 462 (ENQYLDMITK…HDKIEMKMAV (283 aa)). Arg-200 is a dUMP binding site. Cys-345 is an active-site residue. DUMP is bound by residues His-346, 364-368 (QRSCD), Asn-376, and 406-408 (HIY).

It in the N-terminal section; belongs to the dihydrofolate reductase family. The protein in the C-terminal section; belongs to the thymidylate synthase family.

It catalyses the reaction (6S)-5,6,7,8-tetrahydrofolate + NADP(+) = 7,8-dihydrofolate + NADPH + H(+). The enzyme catalyses dUMP + (6R)-5,10-methylene-5,6,7,8-tetrahydrofolate = 7,8-dihydrofolate + dTMP. Its pathway is cofactor biosynthesis; tetrahydrofolate biosynthesis; 5,6,7,8-tetrahydrofolate from 7,8-dihydrofolate: step 1/1. Bifunctional enzyme. Involved in de novo dTMP biosynthesis. Key enzyme in folate metabolism. Catalyzes an essential reaction for de novo glycine and purine synthesis, DNA precursor synthesis, and for the conversion of dUMP to dTMP. In Paramecium tetraurelia, this protein is Bifunctional dihydrofolate reductase-thymidylate synthase.